A 211-amino-acid chain; its full sequence is DELTA-stichotoxin-Hmg2a (211 aa).

An N-terminal signal peptide occupies residues 1 to 19 (MNRLIVLFLIVTMICATIA). Positions 20–34 (VPSREELEDQKEYKR) are excised as a propeptide. The segment at 37–46 (ALAGTIIEGA) is plays an important role in the hemolytic activity. The N-terminal region stretch occupies residues 45 to 64 (GASLGFQILDKVLGELGKVS). Phosphocholine is bound by residues Ser88, Val121, Ser139, Pro141, Tyr167, Tyr171, and Tyr172. The segment at 139–154 (SVPFDYNFYSNWWDVK) is trp-rich region, which is important for the binding to lipid membrane. Residues 177–179 (RGD) carry the Cell attachment site, crucial for protein stability motif.

It belongs to the actinoporin family. Sea anemone subfamily. As to quaternary structure, octamer or nonamer in membranes. Monomer in the soluble state.

Its subcellular location is the secreted. The protein resides in the nematocyst. It is found in the target cell membrane. Functionally, pore-forming protein that forms cations-selective hydrophilic pores of around 1 nm and causes cardiac stimulation and cytolysis. Pore formation is a multi-step process that involves specific recognition of membrane sphingomyelin (but neither cholesterol nor phosphatidylcholine) using aromatic rich region and adjacent phosphocholine (POC) binding site, firm binding to the membrane (mainly driven by hydrophobic interactions) accompanied by the transfer of the N-terminal region to the lipid-water interface and finally pore formation after oligomerization of monomers. The polypeptide is DELTA-stichotoxin-Hmg2a (Heteractis magnifica (Magnificent sea anemone)).